The sequence spans 57 residues: Large ribosomal subunit protein bL33 (57 aa).

It belongs to the bacterial ribosomal protein bL33 family.

In Bifidobacterium longum (strain NCC 2705), this protein is Large ribosomal subunit protein bL33.